The primary structure comprises 860 residues: DNA mismatch repair protein MutS (860 aa).

Residue G607–S614 participates in ATP binding.

Belongs to the DNA mismatch repair MutS family.

In terms of biological role, this protein is involved in the repair of mismatches in DNA. It is possible that it carries out the mismatch recognition step. This protein has a weak ATPase activity. The polypeptide is DNA mismatch repair protein MutS (Listeria monocytogenes serovar 1/2a (strain ATCC BAA-679 / EGD-e)).